We begin with the raw amino-acid sequence, 657 residues long: Transcription factor 12 (657 aa).

A compositionally biased stretch (polar residues) spans Met-1–Tyr-20. 5 disordered regions span residues Met-1–Ser-76, Leu-89–Asp-285, Pro-297–Ser-340, Val-459–Met-555, and Lys-628–Met-657. The span at His-30 to His-43 shows a compositional bias: basic and acidic residues. Composition is skewed to polar residues over residues Thr-49–Ser-70 and Ala-93–Ser-112. Residues Leu-68 to Leu-89 are leucine-zipper. A Nuclear localization signal motif is present at residues Lys-130 to Pro-136. 3 stretches are compositionally biased toward polar residues: residues Met-168–Ser-193, Gly-202–Ser-216, and Val-230–Pro-254. Positions Thr-300–Pro-311 are enriched in low complexity. A compositionally biased stretch (polar residues) spans Val-312–Ser-340. Basic and acidic residues-rich tracts occupy residues Ile-493–His-505, Asp-511–Val-526, and Pro-543–Met-555. In terms of domain architecture, bHLH spans Glu-552–Leu-605. Residues Gln-607–Ser-630 form a class A specific domain region. The span at Ser-648–Met-657 shows a compositional bias: polar residues.

In terms of assembly, efficient DNA binding requires dimerization with another bHLH protein. Forms homo- or heterooligomers with myogenin, E12 and ITF2 proteins.

It is found in the nucleus. In terms of biological role, transcriptional regulator. Involved in the initiation of neuronal differentiation. Activates transcription by binding to the E box-containing promoter. The sequence is that of Transcription factor 12 (TCF12) from Gallus gallus (Chicken).